The sequence spans 113 residues: Insulin-like peptide 02 (113 aa).

A signal peptide spans 1-22 (MFYLTFLLFGAICIGQIQLGQP). Positions 23 to 42 (VKFKVNEDGHRPSVYPIKYR) are excised as a propeptide. Disulfide bonds link cysteine 44–cysteine 99, cysteine 56–cysteine 112, and cysteine 98–cysteine 103. Residues 62–87 (RRKRSIEADIITDKDTANSYFNRVKR) constitute a propeptide, c peptide.

It belongs to the insulin family.

The protein resides in the secreted. Insulin decreases blood glucose concentration. May have evolved to activate insulin receptors (INSR) in vertebrates. Molecular docking studies reveals unique interaction with the human insulin receptor. In vivo, insulin-like peptide injection reduces blood glucose levels in two models of zebrafish diabetes (streptozotocin- and glucose-induced). Also shorter swimming distance of zebrafish larvae, an effect which is not observed with human insulin. The sequence is that of Insulin-like peptide 02 from Exaiptasia diaphana (Tropical sea anemone).